The chain runs to 419 residues: Serine--tRNA ligase (419 aa).

225-227 (TAE) provides a ligand contact to L-serine. 256-258 (RKE) serves as a coordination point for ATP. L-serine is bound at residue Glu279. Residue 343 to 346 (EISS) participates in ATP binding. Position 378 (Ser378) interacts with L-serine.

This sequence belongs to the class-II aminoacyl-tRNA synthetase family. Type-1 seryl-tRNA synthetase subfamily. In terms of assembly, homodimer. The tRNA molecule binds across the dimer.

Its subcellular location is the cytoplasm. It carries out the reaction tRNA(Ser) + L-serine + ATP = L-seryl-tRNA(Ser) + AMP + diphosphate + H(+). It catalyses the reaction tRNA(Sec) + L-serine + ATP = L-seryl-tRNA(Sec) + AMP + diphosphate + H(+). Its pathway is aminoacyl-tRNA biosynthesis; selenocysteinyl-tRNA(Sec) biosynthesis; L-seryl-tRNA(Sec) from L-serine and tRNA(Sec): step 1/1. Its function is as follows. Catalyzes the attachment of serine to tRNA(Ser). Is also able to aminoacylate tRNA(Sec) with serine, to form the misacylated tRNA L-seryl-tRNA(Sec), which will be further converted into selenocysteinyl-tRNA(Sec). This Pelagibacter ubique (strain HTCC1062) protein is Serine--tRNA ligase.